A 441-amino-acid chain; its full sequence is Probable D-serine dehydratase (441 aa).

N6-(pyridoxal phosphate)lysine is present on K101.

The protein belongs to the serine/threonine dehydratase family. DsdA subfamily. Requires pyridoxal 5'-phosphate as cofactor.

The catalysed reaction is D-serine = pyruvate + NH4(+). The sequence is that of Probable D-serine dehydratase from Geobacillus kaustophilus (strain HTA426).